Here is a 381-residue protein sequence, read N- to C-terminus: Peptidoglycan glycosyltransferase MrdB (381 aa).

10 helical membrane-spanning segments follow: residues 11–31, 40–60, 66–86, 102–122, 132–152, 156–176, 180–200, 263–283, 297–317, and 328–348; these read FDLL…LLIF, KQGV…FIPF, WLFA…FMGS, ITLQ…AHLI, YDWG…ALIL, DLGT…IVGL, VWLP…HFLH, FGFL…LHLF, IVAL…IAMT, and LPLF…FAIL.

It belongs to the SEDS family. MrdB/RodA subfamily.

It is found in the cell inner membrane. The enzyme catalyses [GlcNAc-(1-&gt;4)-Mur2Ac(oyl-L-Ala-gamma-D-Glu-L-Lys-D-Ala-D-Ala)](n)-di-trans,octa-cis-undecaprenyl diphosphate + beta-D-GlcNAc-(1-&gt;4)-Mur2Ac(oyl-L-Ala-gamma-D-Glu-L-Lys-D-Ala-D-Ala)-di-trans,octa-cis-undecaprenyl diphosphate = [GlcNAc-(1-&gt;4)-Mur2Ac(oyl-L-Ala-gamma-D-Glu-L-Lys-D-Ala-D-Ala)](n+1)-di-trans,octa-cis-undecaprenyl diphosphate + di-trans,octa-cis-undecaprenyl diphosphate + H(+). It participates in cell wall biogenesis; peptidoglycan biosynthesis. Its function is as follows. Peptidoglycan polymerase that is essential for cell wall elongation. The sequence is that of Peptidoglycan glycosyltransferase MrdB from Helicobacter pylori (strain J99 / ATCC 700824) (Campylobacter pylori J99).